The sequence spans 220 residues: Uracil-DNA glycosylase (220 aa).

Residue aspartate 60 is the Proton acceptor of the active site.

The protein belongs to the uracil-DNA glycosylase (UDG) superfamily. UNG family.

It localises to the cytoplasm. The enzyme catalyses Hydrolyzes single-stranded DNA or mismatched double-stranded DNA and polynucleotides, releasing free uracil.. Excises uracil residues from the DNA which can arise as a result of misincorporation of dUMP residues by DNA polymerase or due to deamination of cytosine. This is Uracil-DNA glycosylase from Francisella tularensis subsp. holarctica (strain FTNF002-00 / FTA).